The following is a 506-amino-acid chain: 2-isopropylmalate synthase (506 aa).

Positions 6-267 (IIVFDTTLRD…YTDIVTKEIY (262 aa)) constitute a Pyruvate carboxyltransferase domain. Residues Asp15, His201, His203, and Asn237 each coordinate Mn(2+). Residues 391–506 (SIQTLSTSSC…LNSYLSMKNR (116 aa)) form a regulatory domain region.

It belongs to the alpha-IPM synthase/homocitrate synthase family. LeuA type 1 subfamily. Homodimer. Mn(2+) serves as cofactor.

The protein resides in the cytoplasm. The catalysed reaction is 3-methyl-2-oxobutanoate + acetyl-CoA + H2O = (2S)-2-isopropylmalate + CoA + H(+). It functions in the pathway amino-acid biosynthesis; L-leucine biosynthesis; L-leucine from 3-methyl-2-oxobutanoate: step 1/4. Its function is as follows. Catalyzes the condensation of the acetyl group of acetyl-CoA with 3-methyl-2-oxobutanoate (2-ketoisovalerate) to form 3-carboxy-3-hydroxy-4-methylpentanoate (2-isopropylmalate). This Campylobacter fetus subsp. fetus (strain 82-40) protein is 2-isopropylmalate synthase.